The primary structure comprises 250 residues: Triosephosphate isomerase (250 aa).

9–11 contacts substrate; it reads NWK. H95 acts as the Electrophile in catalysis. E167 (proton acceptor) is an active-site residue. Residues G173, S213, and 234-235 contribute to the substrate site; that span reads GG.

The protein belongs to the triosephosphate isomerase family. In terms of assembly, homodimer.

It is found in the cytoplasm. It carries out the reaction D-glyceraldehyde 3-phosphate = dihydroxyacetone phosphate. It participates in carbohydrate biosynthesis; gluconeogenesis. Its pathway is carbohydrate degradation; glycolysis; D-glyceraldehyde 3-phosphate from glycerone phosphate: step 1/1. Functionally, involved in the gluconeogenesis. Catalyzes stereospecifically the conversion of dihydroxyacetone phosphate (DHAP) to D-glyceraldehyde-3-phosphate (G3P). This is Triosephosphate isomerase from Flavobacterium johnsoniae (strain ATCC 17061 / DSM 2064 / JCM 8514 / BCRC 14874 / CCUG 350202 / NBRC 14942 / NCIMB 11054 / UW101) (Cytophaga johnsonae).